A 1401-amino-acid chain; its full sequence is MGRLVVKREDYMATKASAIGHASVKKRIRKMFGNIHEVVDMPNLIEVQRDSYENFLRSRPEDGYVSGLEKTLRSVFPIRDFGGVAELDFVQYELEEPKFDVDECRQRGITYAAPMRVTLRLIVFEVDPDTETRSVLDIKEQDVYMGDMPLMTRNGTFFINGTERVIVSQMHRSPGVLFDHDKGKTHSSGKFLFAARVIPYRGSWLDFEFDAKDIVNVRIDRKRKLPVTTLLYALGLNAEQILHHFYNTITFVRGDGGWKVPYVAESWRGRKPFFDIINGDTGEVVFPAGQKISPRAANKAGRDGLETLLIPTEEIYGHYAAYDVIDESTGRIWIEAGDEVTPENLELLDNAGVATLELLDIDHVSTGPWIRNTLKADKAEDRDHALAEIYRVMRPGEPPTKETAEALFYGLFFDPERYDLSAVGRVKLNMRLDLDCPDTVTTLRAEDILAVVKTLVDLKDGKGEVDDIDNLGNRRVRSVGELLENQYRVGLLRMERAVKERMSSVDVSTVMPNDLINAKPAVAAVREFFGSSQLSQFMDQTNPLSEVTHKRRVSALGPGGLTRERAGFEVRDVHPTHYGRICPIETPEGPNIGLINSLATFSRINKYGFIETPYRKVVDHKVTNEVIYLSAMEESRYTVAQANAELDAEGHFVEELVSAREAGEFLMAPREQITLMDVSPKQLVSVAASLIPFLENDDANRALMGSNMQRQAVSLVRAEAPFVGTGMEETVARDSGAAISARRAGIVDQVDASRIVIRTTGEIEAGKPGVDIYRLMKFQRSNQSTCINQRPLVSVGDYVNAGDVLADGPSTELGELALGRNVLVAFMPWNGYNYEDSILISERIVKDDVFTSIHIDEFEVMARDTKLGPEDITRDIPNVGEDALRNLDEAGIVYIGAEVQPGDILVGKITPKGESPMTPEEKLLRAIFGEKASDVRDTSLRLPPGVAGTIVDVRVFNRHGVDKDERAMAIEREEIERLTKDREDERAILNRATYAQLQEKLLGQTVAAAPYKHIVKGARIDIETLASVEPHKWFKFAVEDDARQAELEAIKNQYDSADEAIRKRFEDRVEKAQRGDELPPGVLKMVKVFVAVKRKLQPGDKMAGRHGNKGVISRILPAEDMPFLADGTPVDIVLNPLGVPSRMNIGQIFETHLGWAARGLGAKVRTALEEWREANADRYEWDFSPPEVVRERMIEVYGEKYAEDIKSREDREIVEMAGLLRNGVPMATPVFDGAKPEDISEMLNLAGLDDSGQVELYDGRTGEQFDRKVTVGYIYMLKLHHLVDDKIHARSIGPYSLVTQQPLGGKAQFGGQRFGEMEVWALQAYGAAYTLQEMLTVKSDDVVGRTKVYEAIVKGDDTFEAGIPESFNVLVKEMHSLGLNVELKTSKAKDEDDSSFQVAAE.

This sequence belongs to the RNA polymerase beta chain family. As to quaternary structure, the RNAP catalytic core consists of 2 alpha, 1 beta, 1 beta' and 1 omega subunit. When a sigma factor is associated with the core the holoenzyme is formed, which can initiate transcription.

The catalysed reaction is RNA(n) + a ribonucleoside 5'-triphosphate = RNA(n+1) + diphosphate. In terms of biological role, DNA-dependent RNA polymerase catalyzes the transcription of DNA into RNA using the four ribonucleoside triphosphates as substrates. This is DNA-directed RNA polymerase subunit beta from Zymomonas mobilis subsp. mobilis (strain ATCC 31821 / ZM4 / CP4).